We begin with the raw amino-acid sequence, 814 residues long: Microbial collagenase (814 aa).

The first 21 residues, 1–21 (MELKILSVAIATTLTSTGVFA), serve as a signal peptide directing secretion. The propeptide occupies 22–75 (LSEPVSQVTEQHAHSAHTHGVEFNRVEYQPTATLPIQPSKATRVQSLESLDESS). Residue histidine 477 coordinates Zn(2+). Glutamate 478 is an active-site residue. Histidine 481 serves as a coordination point for Zn(2+). A PKD domain is found at 609–697 (APNAVITANS…VVISALGGND (89 aa)).

It belongs to the peptidase M9A family. Zn(2+) serves as cofactor. Proteolytic cleavage might yield three different active forms.

The protein resides in the secreted. The catalysed reaction is Digestion of native collagen in the triple helical region at Xaa-|-Gly bonds. With synthetic peptides, a preference is shown for Gly at P3 and P1', Pro and Ala at P2 and P2', and hydroxyproline, Ala or Arg at P3'.. The sequence is that of Microbial collagenase from Vibrio alginolyticus.